The sequence spans 196 residues: Mpv17-like protein (196 aa).

At 1-16 (MAGWWPALSRAARRHP) the chain is on the cytoplasmic side. The tract at residues 16–55 (PWPTNVLLYGSLVSAGDALQQRLQGREANWRQTRRVATLV) is targeting to peroxisomes. Residues 17-34 (WPTNVLLYGSLVSAGDAL) form a helical membrane-spanning segment. The Lumenal portion of the chain corresponds to 35-50 (QQRLQGREANWRQTRR). Residues 51 to 67 (VATLVVTFHANFNYVWL) traverse the membrane as a helical segment. The Cytoplasmic segment spans residues 68 to 90 (RLLERALPGRAPHALLAKLLCDQ). Residues 91 to 108 (VVGAPIAVSAFYVGMSIL) traverse the membrane as a helical segment. Residues 109–150 (QGKDDIFLDLKQKFWNTYLSGLMYWPFVQLTNFSLVPVQWRT) lie on the Lumenal side of the membrane. The helical transmembrane segment at 151-167 (AYAGVCGFLWATFICFS) threads the bilayer. Topologically, residues 168–196 (QQSGDGTFKSAFTILYTKGTSATEGYPKK) are cytoplasmic.

It belongs to the peroxisomal membrane protein PXMP2/4 family. In terms of tissue distribution, isoform 1 is detected in the kidney (at protein level). Isoform 1 and isoform 2 are expressed in the kidney, heart, liver, lung, pancreas and skeletal muscle.

Its subcellular location is the peroxisome membrane. Functionally, participates in reactive oxygen species metabolism by up- or down-regulation of the genes of antioxidant enzymes. Protective against the mitochondrial apoptotic cascade. This Homo sapiens (Human) protein is Mpv17-like protein (MPV17L).